The chain runs to 475 residues: BICD family-like cargo adapter 2 (475 aa).

A coiled-coil region spans residues 56-275; sequence ELGKALLERN…LKELQDELHM (220 aa). Composition is skewed to polar residues over residues 286–300 and 308–318; these read HSSL…TAVQ and SAETQSITSGY. The tract at residues 286–318 is disordered; the sequence is HSSLHSEIQQSTAVQNHEKGRNSAETQSITSGY. The stretch at 340 to 413 forms a coiled coil; that stretch reads RLQDQVTMQH…ESLNLQLLST (74 aa). Residues 440 to 450 are compositionally biased toward low complexity; that stretch reads QSQKQQETQKP. Residues 440 to 459 are disordered; that stretch reads QSQKQQETQKPPESPQNSFL.

The protein belongs to the BICDR family.

The protein is BICD family-like cargo adapter 2 (bicdl2) of Xenopus tropicalis (Western clawed frog).